We begin with the raw amino-acid sequence, 120 residues long: NAD(P)H-quinone oxidoreductase subunit 3, chloroplastic (120 aa).

The next 3 membrane-spanning stretches (helical) occupy residues 7–27, 63–83, and 89–109; these read YDSF…AFSI, YMFA…YPWA, and LGLF…VGLV.

This sequence belongs to the complex I subunit 3 family. As to quaternary structure, NDH is composed of at least 16 different subunits, 5 of which are encoded in the nucleus.

The protein resides in the plastid. Its subcellular location is the chloroplast thylakoid membrane. It carries out the reaction a plastoquinone + NADH + (n+1) H(+)(in) = a plastoquinol + NAD(+) + n H(+)(out). The catalysed reaction is a plastoquinone + NADPH + (n+1) H(+)(in) = a plastoquinol + NADP(+) + n H(+)(out). In terms of biological role, NDH shuttles electrons from NAD(P)H:plastoquinone, via FMN and iron-sulfur (Fe-S) centers, to quinones in the photosynthetic chain and possibly in a chloroplast respiratory chain. The immediate electron acceptor for the enzyme in this species is believed to be plastoquinone. Couples the redox reaction to proton translocation, and thus conserves the redox energy in a proton gradient. This chain is NAD(P)H-quinone oxidoreductase subunit 3, chloroplastic, found in Adiantum capillus-veneris (Maidenhair fern).